Here is a 488-residue protein sequence, read N- to C-terminus: Gamma-aminobutyric acid receptor subunit beta-4 (488 aa).

Positions 1–25 (MWTFQADRLSGIVSALAALCVACCA) are cleaved as a signal peptide. Residues 26–244 (QSPSTGNISV…SFRIKRNIGY (219 aa)) lie on the Extracellular side of the membrane. N-linked (GlcNAc...) asparagine glycans are attached at residues Asn-32, Asn-104, Asn-173, and Asn-195. Cys-160 and Cys-174 are oxidised to a cystine. 3 helical membrane-spanning segments follow: residues 245 to 266 (FILQTYMPSILITILSWVSFWI), 271 to 292 (SAARVALGVTTVLTMTTINTHL), and 304 to 326 (AIDVYLMGCFVFVFLALLEYAFV). Over 327 to 465 (NYIFFGRGPR…DLTDVSTIDK (139 aa)) the chain is Cytoplasmic. The helical transmembrane segment at 466 to 487 (WSRIIFPITFGFFNLVYWLYYV) threads the bilayer.

Belongs to the ligand-gated ion channel (TC 1.A.9) family. Gamma-aminobutyric acid receptor (TC 1.A.9.5) subfamily. GABRB4 sub-subfamily. In terms of assembly, generally pentameric. There are five types of GABA(A) receptor chains: alpha, beta, gamma, delta, and rho.

It is found in the postsynaptic cell membrane. The protein resides in the cell membrane. GABA, the major inhibitory neurotransmitter in the vertebrate brain, mediates neuronal inhibition by binding to the GABA/benzodiazepine receptor and opening an integral chloride channel. In Gallus gallus (Chicken), this protein is Gamma-aminobutyric acid receptor subunit beta-4 (GABRB4).